A 430-amino-acid polypeptide reads, in one-letter code: MKRMKLRTNAGPLQGTIQVPGDKSISHRAVILGAVAKGETRVKGLLKGEDVLSTIQAFRNLGVRIEEKDDQLVIEGQGFQGLTAPCQTLNMGNSGTSMRLIAGLLAGQPFSVKMIGDESLSKRPMDRIVYPLKQMGVEISGETDRQFPPLQLQGNRNLQPITYTLPISSAQVKSAILLAALQAKGTTQVVEKEITRNHTEEMIQQFGGRLIVDGKRITLVGPQQLTAQEITVPGDISSAAFWLVAGLIIPGSELLLKNVGVNPTRTGILEVVEKMGAQIVYEDMNKKEQVTSIRVVYSRLKGTIISGGLIPRLIDELPIIALLATQAQGTTCIKDAQELRVKETDRIQVVTDTLNSMGANIKATADGMIIKGPTVLYGANTSTYGDHRIGMMTAIAALLVKQGQVHLDKEEAIMTSYPTFFKDLERLCHD.

3-phosphoshikimate contacts are provided by Lys-23, Ser-24, and Arg-28. Position 23 (Lys-23) interacts with phosphoenolpyruvate. Phosphoenolpyruvate-binding residues include Gly-95 and Arg-123. 4 residues coordinate 3-phosphoshikimate: Ser-169, Gln-171, Asp-315, and Lys-342. Gln-171 serves as a coordination point for phosphoenolpyruvate. Residue Asp-315 is the Proton acceptor of the active site. Positions 346 and 388 each coordinate phosphoenolpyruvate.

The protein belongs to the EPSP synthase family. Monomer.

The protein localises to the cytoplasm. The enzyme catalyses 3-phosphoshikimate + phosphoenolpyruvate = 5-O-(1-carboxyvinyl)-3-phosphoshikimate + phosphate. It functions in the pathway metabolic intermediate biosynthesis; chorismate biosynthesis; chorismate from D-erythrose 4-phosphate and phosphoenolpyruvate: step 6/7. In terms of biological role, catalyzes the transfer of the enolpyruvyl moiety of phosphoenolpyruvate (PEP) to the 5-hydroxyl of shikimate-3-phosphate (S3P) to produce enolpyruvyl shikimate-3-phosphate and inorganic phosphate. The chain is 3-phosphoshikimate 1-carboxyvinyltransferase from Streptococcus pyogenes serotype M3 (strain ATCC BAA-595 / MGAS315).